The primary structure comprises 264 residues: S-adenosylmethionine decarboxylase proenzyme (264 aa).

The active-site Schiff-base intermediate with substrate; via pyruvic acid is serine 112. Serine 112 bears the Pyruvic acid (Ser); by autocatalysis mark. Catalysis depends on histidine 117, which acts as the Proton acceptor; for processing activity. The active-site Proton donor; for catalytic activity is the cysteine 140.

It belongs to the prokaryotic AdoMetDC family. Type 2 subfamily. In terms of assembly, heterooctamer of four alpha and four beta chains arranged as a tetramer of alpha/beta heterodimers. Requires pyruvate as cofactor. Is synthesized initially as an inactive proenzyme. Formation of the active enzyme involves a self-maturation process in which the active site pyruvoyl group is generated from an internal serine residue via an autocatalytic post-translational modification. Two non-identical subunits are generated from the proenzyme in this reaction, and the pyruvate is formed at the N-terminus of the alpha chain, which is derived from the carboxyl end of the proenzyme. The post-translation cleavage follows an unusual pathway, termed non-hydrolytic serinolysis, in which the side chain hydroxyl group of the serine supplies its oxygen atom to form the C-terminus of the beta chain, while the remainder of the serine residue undergoes an oxidative deamination to produce ammonia and the pyruvoyl group blocking the N-terminus of the alpha chain.

The enzyme catalyses S-adenosyl-L-methionine + H(+) = S-adenosyl 3-(methylsulfanyl)propylamine + CO2. Its pathway is amine and polyamine biosynthesis; S-adenosylmethioninamine biosynthesis; S-adenosylmethioninamine from S-adenosyl-L-methionine: step 1/1. Its function is as follows. Catalyzes the decarboxylation of S-adenosylmethionine to S-adenosylmethioninamine (dcAdoMet), the propylamine donor required for the synthesis of the polyamines spermine and spermidine from the diamine putrescine. The sequence is that of S-adenosylmethionine decarboxylase proenzyme from Citrobacter koseri (strain ATCC BAA-895 / CDC 4225-83 / SGSC4696).